Here is a 334-residue protein sequence, read N- to C-terminus: Ventral anterior homeobox 1 (334 aa).

Residues 1 to 34 (MFGKPDKMDVRCHSDAEAARVSKNAHKESRESKG) are compositionally biased toward basic and acidic residues. The tract at residues 1 to 41 (MFGKPDKMDVRCHSDAEAARVSKNAHKESRESKGAEGNLPA) is disordered. Positions 100–159 (PKRTRTSFTAEQLYRLEMEFQRCQYVVGRERTELARQLNLSETQVKVWFQNRRTKQKKDQ) form a DNA-binding region, homeobox. Disordered stretches follow at residues 234-263 (PGPA…GLHA) and 314-334 (SAFE…KALD). The segment covering 323 to 334 (NNKEGAEKKALD) has biased composition (basic and acidic residues).

This sequence belongs to the EMX homeobox family.

It localises to the nucleus. Its function is as follows. Transcription factor that may function in dorsoventral specification of the forebrain. Required for axon guidance and major tract formation in the developing forebrain. May contribute to the differentiation of the neuroretina, pigmented epithelium and optic stalk. The protein is Ventral anterior homeobox 1 (VAX1) of Homo sapiens (Human).